A 277-amino-acid chain; its full sequence is Undecaprenyl-diphosphatase (277 aa).

The next 5 membrane-spanning stretches (helical) occupy residues 85-105 (VNIV…AGAI), 109-129 (LFAP…ILWV), 188-208 (ATEF…VYSV), 218-238 (ADIP…FLCV), and 256-276 (YRIG…VVWA).

Belongs to the UppP family.

It localises to the cell inner membrane. It catalyses the reaction di-trans,octa-cis-undecaprenyl diphosphate + H2O = di-trans,octa-cis-undecaprenyl phosphate + phosphate + H(+). Functionally, catalyzes the dephosphorylation of undecaprenyl diphosphate (UPP). Confers resistance to bacitracin. This chain is Undecaprenyl-diphosphatase, found in Herminiimonas arsenicoxydans.